We begin with the raw amino-acid sequence, 210 residues long: Viral protein 1 (210 aa).

The sequence is that of Viral protein 1 from Chaetoceros (Chaetoceros sp. DNA virus 7).